Reading from the N-terminus, the 345-residue chain is uncharacterized protein (345 aa).

The protein localises to the cell membrane. Its function is as follows. Involved in potassium and divalent cation transport. Enhances the transport activity of the cation/potassium transporter CzcD. This is an uncharacterized protein from Bacillus subtilis (strain 168).